We begin with the raw amino-acid sequence, 452 residues long: Probable phosphoglucosamine mutase (452 aa).

The active-site Phosphoserine intermediate is serine 101. 4 residues coordinate Mg(2+): serine 101, aspartate 242, aspartate 244, and aspartate 246. At serine 101 the chain carries Phosphoserine.

This sequence belongs to the phosphohexose mutase family. Requires Mg(2+) as cofactor. Activated by phosphorylation.

The catalysed reaction is alpha-D-glucosamine 1-phosphate = D-glucosamine 6-phosphate. In terms of biological role, catalyzes the conversion of glucosamine-6-phosphate to glucosamine-1-phosphate. The protein is Probable phosphoglucosamine mutase of Methanosphaera stadtmanae (strain ATCC 43021 / DSM 3091 / JCM 11832 / MCB-3).